The chain runs to 243 residues: Tetraspanin-36 (243 aa).

The Cytoplasmic portion of the chain corresponds to 1–9 (MDCGIITSK). Residues 10 to 30 (TILLLLSLIFWAAGAALAYVG) traverse the membrane as a helical segment. Residues 31–49 (SYVIKSYNNFEDFMSDRHT) are Lumenal-facing. A helical membrane pass occupies residues 50 to 70 (LIPAAIIIGVAVVMFIIGFVG). The Cytoplasmic portion of the chain corresponds to 71–84 (CCATLRESKVGLGL). The helical transmembrane segment at 85–105 (FLIIIMLIFAAEVTAFVFGII) threads the bilayer. At 106–208 (YRGRIRGDLE…QVLQDVLSYA (103 aa)) the chain is on the lumenal side. Asn-149, Asn-163, and Asn-174 each carry an N-linked (GlcNAc...) asparagine glycan. The helical transmembrane segment at 209-229 (MLVILGFAIIKFFGMLSVCVI) threads the bilayer. At 230-243 (TCKSKKNEYQPLYA) the chain is on the cytoplasmic side.

It belongs to the tetraspanin (TM4SF) family. N-glycosylated. In terms of tissue distribution, strongly expressed in melanophores and xanthophores. Also detected in eye, brain, heart, skin, fin, testis and ovary.

It is found in the golgi apparatus membrane. It localises to the endoplasmic reticulum membrane. Functionally, plays a role in migration and segregation of pigment cells (melanophores and xanthophores). Contributes to pigment stripe patterning in the epidermis. The chain is Tetraspanin-36 from Danio rerio (Zebrafish).